The sequence spans 206 residues: Octanoyltransferase (206 aa).

One can recognise a BPL/LPL catalytic domain in the interval 30–206 (PETNDEIWLV…EFVTLLNNSI (177 aa)). Substrate is bound by residues 69-76 (RGGQVTYH), 137-139 (SLG), and 150-152 (GIA). C168 (acyl-thioester intermediate) is an active-site residue.

This sequence belongs to the LipB family.

It localises to the cytoplasm. The catalysed reaction is octanoyl-[ACP] + L-lysyl-[protein] = N(6)-octanoyl-L-lysyl-[protein] + holo-[ACP] + H(+). Its pathway is protein modification; protein lipoylation via endogenous pathway; protein N(6)-(lipoyl)lysine from octanoyl-[acyl-carrier-protein]: step 1/2. Functionally, catalyzes the transfer of endogenously produced octanoic acid from octanoyl-acyl-carrier-protein onto the lipoyl domains of lipoate-dependent enzymes. Lipoyl-ACP can also act as a substrate although octanoyl-ACP is likely to be the physiological substrate. This Francisella tularensis subsp. holarctica (strain FTNF002-00 / FTA) protein is Octanoyltransferase.